Reading from the N-terminus, the 132-residue chain is Small ribosomal subunit protein uS8 (132 aa).

The protein belongs to the universal ribosomal protein uS8 family. Part of the 30S ribosomal subunit. Contacts proteins S5 and S12.

Its function is as follows. One of the primary rRNA binding proteins, it binds directly to 16S rRNA central domain where it helps coordinate assembly of the platform of the 30S subunit. The polypeptide is Small ribosomal subunit protein uS8 (Brucella melitensis biotype 1 (strain ATCC 23456 / CCUG 17765 / NCTC 10094 / 16M)).